The sequence spans 300 residues: Sulfate adenylyltransferase subunit 2 (300 aa).

The segment at 281–300 (RAIDRDEAGSMEKKKREGYF) is disordered.

The protein belongs to the PAPS reductase family. CysD subfamily. Heterodimer composed of CysD, the smaller subunit, and CysN.

The enzyme catalyses sulfate + ATP + H(+) = adenosine 5'-phosphosulfate + diphosphate. It functions in the pathway sulfur metabolism; hydrogen sulfide biosynthesis; sulfite from sulfate: step 1/3. Functionally, with CysN forms the ATP sulfurylase (ATPS) that catalyzes the adenylation of sulfate producing adenosine 5'-phosphosulfate (APS) and diphosphate, the first enzymatic step in sulfur assimilation pathway. APS synthesis involves the formation of a high-energy phosphoric-sulfuric acid anhydride bond driven by GTP hydrolysis by CysN coupled to ATP hydrolysis by CysD. The polypeptide is Sulfate adenylyltransferase subunit 2 (Brucella canis (strain ATCC 23365 / NCTC 10854 / RM-666)).